We begin with the raw amino-acid sequence, 746 residues long: MIHLSQTMDKSSLPSLSDLCMSLVSSRLELFCEMRDDGSLSFREPLVFPQELADQLLCKMATDGVLNDSTVGIFRNCQQFRLRHACIRTARISAEAFHRALCPHRLVELDASRVNADLTIADILRGLSSNKSLQESLQRLVLNGLTMSSLEEPSRRCFSAMQGLRALSVSNVDFYDWGLADVCLLPRLESLDISNTSVSNLTPLLGLRSRLRYLTMHQLKRLEMTTAQLLAVLSQLEVLQHLDISDDKQFTSDVARQLLETPGILPQLVSLDVSGRKQVTDAAVKAFVEARPGMTFVGLLATDAGFSEFLSGEGSLKVTGEANETQICEALRRYSEREGFVREALFHLFSLTHAIEKPRPDILKLVALGMKNHPTTLNVQLAASACVFNLTKQELAFGIPVRLLGNVTQQLLEAMKTFPNHQQLQKNCLLSLCSDRILQEVPFNRFEAAKLVMQWLCNHEDQNMQRMAVAIISILAAKLSTEQTAQLGAELFIVKQLLHIVRQKTCQSTVDATLKFTLSALWNLTDESPTTCRHFIENQGLELFIKVLESFPSESSIQQKVLGLLNNIAEVSELHGELMVQSFLDHIRTLLHSPEVEVSYFAAGILAHLTSRGEKVWTLELTLRNTLLQQLHSAILKWPTPECEMVAYRSFNPFFPLLECFQTPGVQLWAAWAMQHVCSKNAGRYCSMLLEEGGLQHLEAITSHPKTHSDVRRLTESILDGLQRHRARTGYTAIPKTQAHREKCNP.

LRR repeat units lie at residues 185–209 (LPRL…GLRS), 216–241 (MHQL…VLQH), and 265–289 (LPQL…AFVE).

This sequence belongs to the zyg-11 family.

Serves as substrate adapter subunit in an E3 ubiquitin ligase complex zyg11-cul2-elongin BC. Targets substrates bearing N-terminal glycine degrons for proteasomal degradation. In Danio rerio (Zebrafish), this protein is Protein zyg-11 homolog (zyg11).